A 492-amino-acid chain; its full sequence is NADH-quinone oxidoreductase subunit N 2 (492 aa).

14 helical membrane passes run 16-36 (ILPE…DALI), 44-64 (PLGY…ACQA), 87-107 (FSLF…LVSF), 118-138 (GEYY…TSAT), 140-160 (LVLI…LAAM), 175-195 (FLLG…IFGA), 216-236 (PIIY…VAAA), 250-270 (PSPI…AVLL), 282-302 (FWIV…GALV), 309-329 (LLAY…AAAK), 333-353 (ISAA…AFAV), 381-401 (AAIL…GGFF), 416-438 (VWLT…RIIV), and 455-475 (PFGL…LGVL).

It belongs to the complex I subunit 2 family. NDH-1 is composed of 14 different subunits. Subunits NuoA, H, J, K, L, M, N constitute the membrane sector of the complex.

It is found in the cell inner membrane. The catalysed reaction is a quinone + NADH + 5 H(+)(in) = a quinol + NAD(+) + 4 H(+)(out). NDH-1 shuttles electrons from NADH, via FMN and iron-sulfur (Fe-S) centers, to quinones in the respiratory chain. The immediate electron acceptor for the enzyme in this species is believed to be ubiquinone. Couples the redox reaction to proton translocation (for every two electrons transferred, four hydrogen ions are translocated across the cytoplasmic membrane), and thus conserves the redox energy in a proton gradient. In Koribacter versatilis (strain Ellin345), this protein is NADH-quinone oxidoreductase subunit N 2.